The chain runs to 526 residues: Tyrosine-protein kinase transforming protein Src (526 aa).

Residues Met1–Glu57 form a disordered region. Gly2 carries N-myristoyl glycine; by host lipidation. Over residues Lys7–His25 the composition is skewed to basic and acidic residues. Positions Gly81 to Ser142 constitute an SH3 domain. Positions Trp148–Cys245 constitute an SH2 domain. Residues Leu267–Leu517 form the Protein kinase domain. ATP is bound by residues Leu273 to Val281 and Lys295. The active-site Proton acceptor is Asp386. Residue Tyr416 is modified to Phosphotyrosine; by autocatalysis.

The protein belongs to the protein kinase superfamily. Tyr protein kinase family. SRC subfamily. As to quaternary structure, homodimer. In terms of processing, the phosphorylated form is termed pp60v-src.

It catalyses the reaction L-tyrosyl-[protein] + ATP = O-phospho-L-tyrosyl-[protein] + ADP + H(+). This phosphoprotein, required for both the initiation and the maintenance of neoplastic transformation, is a protein kinase that catalyzes the phosphorylation of tyrosine residues in vitro. Causes mitotic slippage in addition to cytokinesis failure in the host cell. Phosphorylates and attenuates the activity of host CDK1, possibly causing the mitotic slippage. The polypeptide is Tyrosine-protein kinase transforming protein Src (V-SRC) (Rous sarcoma virus subgroup A (strain Schmidt-Ruppin) (RSV-SR-A)).